Here is a 326-residue protein sequence, read N- to C-terminus: tRNA-modifying protein YgfZ (326 aa).

Residues tryptophan 27 and tryptophan 189 each coordinate folate.

Belongs to the tRNA-modifying YgfZ family.

The protein resides in the cytoplasm. Folate-binding protein involved in regulating the level of ATP-DnaA and in the modification of some tRNAs. It is probably a key factor in regulatory networks that act via tRNA modification, such as initiation of chromosomal replication. This is tRNA-modifying protein YgfZ from Escherichia coli O127:H6 (strain E2348/69 / EPEC).